Reading from the N-terminus, the 141-residue chain is Hemoglobin subunit alpha-A (141 aa).

The region spanning 1–141 is the Globin domain; it reads VLSGTDKTNV…VGAVLTAKYR (141 aa). His-58 contributes to the O2 binding site. Heme b is bound at residue His-87.

The protein belongs to the globin family. Heterotetramer of two alpha chains and two beta chains. Red blood cells.

Involved in oxygen transport from the lung to the various peripheral tissues. The protein is Hemoglobin subunit alpha-A (HBAA) of Struthio camelus (Common ostrich).